A 422-amino-acid chain; its full sequence is Synaptotagmin-1 (422 aa).

The Vesicular segment spans residues 1–57; it reads MVSESHHEALAAPPVTTVATVLPSNATEPASPGEGKEDAFSKLKEKFMNELHKIPLP. The N-linked (GlcNAc...) asparagine glycan is linked to asparagine 25. Residues 58–80 form a helical membrane-spanning segment; it reads PWALIAIAIVAVLLVLTCCFCIC. Residues cysteine 75, cysteine 76, cysteine 78, cysteine 80, and cysteine 83 are each lipidated (S-palmitoyl cysteine). Over 81–422 the chain is Cytoplasmic; it reads KKCLFKKKNK…EVDAMLAVKK (342 aa). The tract at residues 113 to 142 is disordered; sequence TMKDQALKDDDAETGLTDGEEKEEPKEEEK. Residues 122 to 134 show a composition bias toward acidic residues; that stretch reads DDAETGLTDGEEK. Residue threonine 129 is modified to Phosphothreonine. A phospholipid binding region spans residues 136 to 382; sequence EPKEEEKLGK…AIGKVFVGYN (247 aa). Residues 142 to 261 enclose the C2 1 domain; it reads KLGKLQYSLD…DFGHVTEEWR (120 aa). Residues leucine 172, aspartate 173, and aspartate 179 each coordinate Ca(2+). At tyrosine 230 the chain carries Phosphotyrosine. Ca(2+)-binding residues include aspartate 231, phenylalanine 232, aspartate 233, serine 236, lysine 237, and aspartate 239. Phosphoserine is present on serine 265. A C2 2 domain is found at 273–406; it reads KLGDICFSLR…NPRRPIAQWH (134 aa). Positions 304 and 310 each coordinate Ca(2+). Phosphoserine occurs at positions 343 and 345. Positions 364, 366, and 372 each coordinate Ca(2+).

This sequence belongs to the synaptotagmin family. As to quaternary structure, homotetramer. Heterodimer; heterodimerizes with SYT2 in presence of calcium. Interacts with SCAMP5. Interacts with STON2. Forms a complex with SV2B, syntaxin 1 and SNAP25. Interacts with SV2A, SV2B and SV2C. Interacts with RIMS1. Interacts with PRRT2. Interacts with DNAJC5 in a phosphorylation-dependent manner. Interacts (via N-terminus) with RAB3A. Interacts with SYT12. Interacts with calmodulin. Interacts with DNM1 (via C-terminal proline-rich domain (PRD)); this interaction facilitates vesicle fission during clathrin-mediated endocytosis (CME). It depends on Ca(2+) as a cofactor. Post-translationally, glycosylated. Expressed in melanocytes.

The protein localises to the cytoplasmic vesicle. Its subcellular location is the secretory vesicle membrane. The protein resides in the secretory vesicle. It is found in the synaptic vesicle membrane. It localises to the chromaffin granule membrane. The protein localises to the cytoplasm. Calcium sensor that participates in triggering neurotransmitter release at the synapse. May have a regulatory role in the membrane interactions during trafficking of synaptic vesicles at the active zone of the synapse. It binds acidic phospholipids with a specificity that requires the presence of both an acidic head group and a diacyl backbone. A Ca(2+)-dependent interaction between synaptotagmin and putative receptors for activated protein kinase C has also been reported. It can bind to at least three additional proteins in a Ca(2+)-independent manner; these are neurexins, syntaxin and AP2. Plays a role in dendrite formation by melanocytes. The chain is Synaptotagmin-1 from Homo sapiens (Human).